The primary structure comprises 227 residues: Class I hydrophobin A (227 aa).

A signal peptide spans 1 to 18 (MQFSLSAIVLGLAATVYA). N-linked (GlcNAc...) asparagine glycosylation occurs at asparagine 50. Disulfide bonds link cysteine 60/cysteine 138, cysteine 68/cysteine 132, and cysteine 69/cysteine 109.

Belongs to the fungal hydrophobin family.

The protein localises to the secreted. Its subcellular location is the cell wall. Functionally, aerial growth, conidiation, and dispersal of filamentous fungi in the environment rely upon a capability of their secreting small amphipathic proteins called hydrophobins (HPBs) with low sequence identity. Class I can self-assemble into an outermost layer of rodlet bundles on aerial cell surfaces, conferring cellular hydrophobicity that supports fungal growth, development and dispersal; whereas Class II form highly ordered films at water-air interfaces through intermolecular interactions but contribute nothing to the rodlet structure. In P.expansum, hydrophobins contribute to germination, tolerance to cold stress and mycotoxins patulin and citrinin production. HfbA and HfbB are essential for fungal surface hydrophobicity and HfbA mediates air and water dispersal. The sequence is that of Class I hydrophobin A from Penicillium expansum (Blue mold rot fungus).